A 351-amino-acid polypeptide reads, in one-letter code: Maleylacetate reductase (351 aa).

This sequence belongs to the iron-containing alcohol dehydrogenase family. As to quaternary structure, homodimer.

The enzyme catalyses 3-oxoadipate + NAD(+) = maleylacetate + NADH + H(+). The protein operates within aromatic compound metabolism. Functionally, involved in the gamma-resorcylate (2,6-dihydroxybenzoate) catabolism. Catalyzes the reduction of maleylacetate to 3-oxoadipate. The polypeptide is Maleylacetate reductase (Rhizobium sp. (strain MTP-10005)).